A 127-amino-acid polypeptide reads, in one-letter code: Multiple antibiotic resistance protein MarA (127 aa).

Residues 12-110 (HSILDWIEDN…DVPPHKYRMT (99 aa)) enclose the HTH araC/xylS-type domain. DNA-binding regions (H-T-H motif) lie at residues 29 to 50 (EKVSERSGYSKWHLQRMFKKET) and 77 to 100 (ILYLAERYGFESQQTLTRTFKNYF).

In terms of assembly, monomer.

May be a transcriptional activator of genes involved in the multiple antibiotic resistance (Mar) phenotype. It can also activate genes such as sodA, zwf and micF. The polypeptide is Multiple antibiotic resistance protein MarA (marA) (Escherichia coli (strain K12)).